The primary structure comprises 520 residues: TnpB-like protein L79 (520 aa).

A compositionally biased stretch (basic residues) spans 21 to 47 (GSKTKKKVFVKKKPPDKKPLKKPVKKT). The interval 21 to 52 (GSKTKKKVFVKKKPPDKKPLKKPVKKTVKTDK) is disordered. 4 residues coordinate Zn(2+): C474, C477, C491, and C494.

It in the central section; belongs to the transposase 2 family. This sequence in the C-terminal section; belongs to the transposase 35 family.

The polypeptide is TnpB-like protein L79 (Acanthamoeba polyphaga mimivirus (APMV)).